A 198-amino-acid chain; its full sequence is Large ribosomal subunit protein eL19 (198 aa).

Disordered regions lie at residues 66–85 (YEEARRKGRHTGYGKRRGTA) and 150–177 (KRAKQLADQAQARRDKNKESRKRREERQ). The segment covering 71-83 (RKGRHTGYGKRRG) has biased composition (basic residues). Over residues 160–177 (QARRDKNKESRKRREERQ) the composition is skewed to basic and acidic residues.

It belongs to the eukaryotic ribosomal protein eL19 family.

The protein is Large ribosomal subunit protein eL19 (rpl-19) of Caenorhabditis elegans.